A 609-amino-acid polypeptide reads, in one-letter code: MNTEPEAKTNEYLRGIVANLPEKPGVYQYLNTEGTIIYVGKAKNLKKRVYSYFSKEHEPGKTRVLVSKIADIRYIVVNTEEDALLLENNLIKKYKPRYNVLLKDDKTYPSICVQNEYFPRIFRTRKIIKNGSSYYGPYSHLPSMYAVLDLIKHLYPLRTCNLNLSPENIRAGKFKVCLEYHIKKCAGPCVGLQSHEDYLKNIDEIKEILKGNTQDISRMLVEKMQELANEMKFEEAQKIKEKYLLIENYRSKSEVVSSVLHNIDVFSIEEDDSNSAFVNYLHITNGAINQAFTFEYKKKLNESKEELLTLGIIEMRERYKSHSREIIVPFELDLELNNVVFTVPQRGDKKKLLDLSILNVKQYKADRLKQAEKLNPEQRSMRLLKEIQNELHLDKPPLQIECFDNSNIQGSDAVAACVVFKKAKPSKKDYRKYNIKTVVGPDDYASMKEVVRRRYQRAIEENSPLPDLIITDGGKGQMEVVREVIEDELHLNIPIAGLAKDNKHRTSELLFGFPAQTIGIKQQSSLFRLLTQIQDEVHRFAITFHRDKRSKRQVASALDSIKGIGEKTKTALLKEFKSVKRIKEASLEEIAKVIGEVKAQTVKKGLSNE.

The 79-residue stretch at Glu22–Val100 folds into the GIY-YIG domain. A UVR domain is found at Gln214 to Tyr249.

This sequence belongs to the UvrC family. In terms of assembly, interacts with UvrB in an incision complex.

Its subcellular location is the cytoplasm. Functionally, the UvrABC repair system catalyzes the recognition and processing of DNA lesions. UvrC both incises the 5' and 3' sides of the lesion. The N-terminal half is responsible for the 3' incision and the C-terminal half is responsible for the 5' incision. This is UvrABC system protein C from Bacteroides thetaiotaomicron (strain ATCC 29148 / DSM 2079 / JCM 5827 / CCUG 10774 / NCTC 10582 / VPI-5482 / E50).